Consider the following 383-residue polypeptide: MKKFTYFTSEFVSPGHPDKISDQISDAILDACLKDDPNSRVACEVFCTTGLVVVGGEITTSTYIDVQDIVRKKIDEIGYRPGMGFDSNCGTLSCIHAQSPDIAMGVDIGGAGDQGIMFGGAVRETEELMPLALVLSREILVKLTNMMKSNEIEWARPDQKSQVTLAYDENGKVDHVDSIVVSVQHDEDTTHDEIEKIVIEKVVKPVLEKYNLSSDNIKYYINPTGRFVIGGPHGDTGVTGRKIIVDTYGGYFKHGGGAFSGKDPSKVDRSAAYAARWVAKNIVAAELADKCEIQLSYAIGVPKPVSVKVDTFGTSKVDEDKISEAVSKVFDLSPRGIEKALELREGNFKYQDLAAFGHIGRTDIDTPWERLNKVDELKKAIEL.

His16 serves as a coordination point for ATP. Mg(2+) is bound at residue Asp18. Residue Glu44 coordinates K(+). Residues Glu57 and Gln98 each coordinate L-methionine. Residues 98 to 108 form a flexible loop region; it reads QSPDIAMGVDI. Residues 158–160, 226–227, Asp235, 241–242, Ala258, and Lys262 each bind ATP; these read DQK, RF, and RK. Asp235 serves as a coordination point for L-methionine. Lys266 is an L-methionine binding site.

It belongs to the AdoMet synthase family. As to quaternary structure, homotetramer; dimer of dimers. Mg(2+) serves as cofactor. The cofactor is K(+).

It localises to the cytoplasm. It carries out the reaction L-methionine + ATP + H2O = S-adenosyl-L-methionine + phosphate + diphosphate. The protein operates within amino-acid biosynthesis; S-adenosyl-L-methionine biosynthesis; S-adenosyl-L-methionine from L-methionine: step 1/1. In terms of biological role, catalyzes the formation of S-adenosylmethionine (AdoMet) from methionine and ATP. The overall synthetic reaction is composed of two sequential steps, AdoMet formation and the subsequent tripolyphosphate hydrolysis which occurs prior to release of AdoMet from the enzyme. This chain is S-adenosylmethionine synthase, found in Fusobacterium nucleatum subsp. nucleatum (strain ATCC 25586 / DSM 15643 / BCRC 10681 / CIP 101130 / JCM 8532 / KCTC 2640 / LMG 13131 / VPI 4355).